Consider the following 92-residue polypeptide: Small ribosomal subunit protein uS19c (92 aa).

This sequence belongs to the universal ribosomal protein uS19 family.

It is found in the plastid. It localises to the chloroplast. In terms of biological role, protein S19 forms a complex with S13 that binds strongly to the 16S ribosomal RNA. This chain is Small ribosomal subunit protein uS19c, found in Psilotum nudum (Whisk fern).